Here is a 127-residue protein sequence, read N- to C-terminus: Major sperm protein 77/79 (127 aa).

The residue at position 2 (Ala-2) is an N-acetylalanine. In terms of domain architecture, MSP spans 9–126; the sequence is DIQTQPGTKI…RRKNLPIEYN (118 aa).

In terms of tissue distribution, sperm.

The protein resides in the cell projection. It localises to the pseudopodium. Its subcellular location is the cytoplasm. It is found in the cytoskeleton. In terms of biological role, central component in molecular interactions underlying sperm crawling. Forms an extensive filament system that extends from sperm villipoda, along the leading edge of the pseudopod. The polypeptide is Major sperm protein 77/79 (msp-77) (Caenorhabditis elegans).